Here is a 463-residue protein sequence, read N- to C-terminus: Glutamate--tRNA ligase 2 (463 aa).

Residues 10–20 (PSPTGFLHIGS) carry the 'HIGH' region motif. Residues 239 to 243 (KLSKR) carry the 'KMSKS' region motif. Lysine 242 provides a ligand contact to ATP.

This sequence belongs to the class-I aminoacyl-tRNA synthetase family. Glutamate--tRNA ligase type 1 subfamily. As to quaternary structure, monomer.

The protein resides in the cytoplasm. The enzyme catalyses tRNA(Glu) + L-glutamate + ATP = L-glutamyl-tRNA(Glu) + AMP + diphosphate. Its function is as follows. Catalyzes the attachment of glutamate to tRNA(Glu) in a two-step reaction: glutamate is first activated by ATP to form Glu-AMP and then transferred to the acceptor end of tRNA(Glu). In Rickettsia felis (strain ATCC VR-1525 / URRWXCal2) (Rickettsia azadi), this protein is Glutamate--tRNA ligase 2.